We begin with the raw amino-acid sequence, 364 residues long: V-type proton ATPase subunit d (364 aa).

This sequence belongs to the V-ATPase V0D/AC39 subunit family. As to quaternary structure, V-ATPase is a heteromultimeric enzyme composed of a peripheral catalytic V1 complex (components A to H) attached to an integral membrane V0 proton pore complex (components: a, c, c', c'', d, e, f and VOA1).

It localises to the vacuole membrane. In terms of biological role, subunit of the V0 complex of vacuolar(H+)-ATPase (V-ATPase), a multisubunit enzyme composed of a peripheral complex (V1) that hydrolyzes ATP and a membrane integral complex (V0) that translocates protons. V-ATPase is responsible for acidifying and maintaining the pH of intracellular compartments. This subunit is a non-integral membrane component of the membrane pore domain and is required for proper assembly of the V0 sector. Might be involved in the regulated assembly of V1 subunits onto the membrane sector or alternatively may prevent the passage of protons through V0 pores. The sequence is that of V-type proton ATPase subunit d from Neurospora crassa (strain ATCC 24698 / 74-OR23-1A / CBS 708.71 / DSM 1257 / FGSC 987).